The sequence spans 84 residues: Delta-conotoxin-like Bt6.4 (84 aa).

The first 22 residues, 1-22, serve as a signal peptide directing secretion; it reads MKLTCMVIVAVLFLTAWTSVMA. A propeptide spanning residues 23 to 57 is cleaved from the precursor; the sequence is DGSINRPDIAEGWQKFFSKARDEMKNRAASELNKR. 3 cysteine pairs are disulfide-bonded: C58-C74, C65-C78, and C73-C82.

It belongs to the conotoxin O1 superfamily. In terms of tissue distribution, expressed by the venom duct.

Its subcellular location is the secreted. This toxin activates voltage-gated sodium channels. It shifts the voltage-dependence of activation to more hyperpolarized potentials but has only little effect on channel inactivation. It is active on Nav1.3/SCN3A (EC(50)=3.98 nM), Nav1.4/SCN4A (EC(50)=4.99 nM), Nav1.6/SCN8A (EC(50)=1.27 nM) and Nav1.7/SCN9A (EC(50)=2.42 nM) voltage-gated sodium channels. In vivo, it induces nocifensive or pain-like behaviors in mice when injected intraplantarly. In Conus betulinus (Beech cone), this protein is Delta-conotoxin-like Bt6.4.